The chain runs to 92 residues: Cytochrome c2 (92 aa).

The heme c site is built by Cys-12, Cys-15, His-16, and Met-66.

The protein belongs to the cytochrome c family. In terms of processing, binds 1 heme c group covalently per subunit.

Functionally, cytochrome c2 is found mainly in purple, non-sulfur, photosynthetic bacteria where it functions as the electron donor to the oxidized bacteriochlorophyll in the photophosphorylation pathway. However, it may also have a role in the respiratory chain and is found in some non-photosynthetic bacteria. This is Cytochrome c2 from Rhodocyclus tenuis (Rhodospirillum tenue).